Consider the following 637-residue polypeptide: Chaperone protein DnaK (637 aa).

Residue Thr198 is modified to Phosphothreonine; by autocatalysis. The tract at residues 597–637 (MYAKTSQAGAGPQPGAGPGTGGQGPGKKDEDVVDADFEEVK) is disordered. Gly residues predominate over residues 608 to 621 (PQPGAGPGTGGQGP). The segment covering 627–637 (DVVDADFEEVK) has biased composition (acidic residues).

It belongs to the heat shock protein 70 family.

In terms of biological role, acts as a chaperone. The polypeptide is Chaperone protein DnaK (Syntrophus aciditrophicus (strain SB)).